Consider the following 690-residue polypeptide: Proprotein convertase subtilisin/kexin type 9 (690 aa).

An N-terminal signal peptide occupies residues 1-28 (MGTVSSRRSWWPLPLLLLLLLGPAGARA). Positions 29–150 (QEDEDGDYEE…IEEDSSVFAQ (122 aa)) are excised as a propeptide. Tyr36 carries the post-translational modification Sulfotyrosine. Ser45 carries the phosphoserine modification. The Inhibitor I9 domain maps to 75 to 147 (TYVVVLKEET…VDYIEEDSSV (73 aa)). In terms of domain architecture, Peptidase S8 spans 153–459 (PWNLERITPP…GWQLFCRTVW (307 aa)). Residues Asp184 and His224 each act as charge relay system in the active site. Intrachain disulfides connect Cys221–Cys253 and Cys321–Cys356. Ser384 functions as the Charge relay system in the catalytic mechanism. The C-terminal domain stretch occupies residues 448–690 (GAGWQLFCRT…HLAQASQELQ (243 aa)). 3 disulfides stabilise this stretch: Cys455–Cys525, Cys475–Cys524, and Cys484–Cys507. Asn531 carries N-linked (GlcNAc...) asparagine glycosylation. 6 disulfides stabilise this stretch: Cys532–Cys599, Cys550–Cys598, Cys560–Cys586, Cys606–Cys677, Cys624–Cys676, and Cys633–Cys652. Residue Ser686 is modified to Phosphoserine.

It belongs to the peptidase S8 family. As to quaternary structure, monomer. Can self-associate to form dimers and higher multimers which may have increased LDLR degrading activity. The precursor protein but not the mature protein may form multimers. Interacts with APOB, VLDLR, LRP8/APOER2 and BACE1. The full-length immature form (pro-PCSK9) interacts with SCNN1A, SCNN1B and SCNN1G. The pro-PCSK9 form (via C-terminal domain) interacts with LDLR. Interacts (via the C-terminal domain) with ANXA2 (via repeat Annexin 1); the interaction inhibits the degradation of LDLR. Ca(2+) serves as cofactor. Post-translationally, cleavage by furin and PCSK5 generates a truncated inactive protein that is unable to induce LDLR degradation. In terms of processing, undergoes autocatalytic cleavage in the endoplasmic reticulum to release the propeptide from the N-terminus and the cleavage of the propeptide is strictly required for its maturation and activation. The cleaved propeptide however remains associated with the catalytic domain through non-covalent interactions, preventing potential substrates from accessing its active site. As a result, it is secreted from cells as a propeptide-containing, enzymatically inactive protein. Phosphorylation protects the propeptide against proteolysis.

It is found in the cytoplasm. It localises to the secreted. The protein localises to the endosome. The protein resides in the lysosome. Its subcellular location is the cell surface. It is found in the endoplasmic reticulum. It localises to the golgi apparatus. Its activity is regulated as follows. Its proteolytic activity is autoinhibited by the non-covalent binding of the propeptide to the catalytic domain. Inhibited by EGTA. Functionally, crucial player in the regulation of plasma cholesterol homeostasis. Binds to low-density lipid receptor family members: low density lipoprotein receptor (LDLR), very low density lipoprotein receptor (VLDLR), apolipoprotein E receptor (LRP1/APOER) and apolipoprotein receptor 2 (LRP8/APOER2), and promotes their degradation in intracellular acidic compartments. Acts via a non-proteolytic mechanism to enhance the degradation of the hepatic LDLR through a clathrin LDLRAP1/ARH-mediated pathway. May prevent the recycling of LDLR from endosomes to the cell surface or direct it to lysosomes for degradation. Can induce ubiquitination of LDLR leading to its subsequent degradation. Inhibits intracellular degradation of APOB via the autophagosome/lysosome pathway in a LDLR-independent manner. Involved in the disposal of non-acetylated intermediates of BACE1 in the early secretory pathway. Inhibits epithelial Na(+) channel (ENaC)-mediated Na(+) absorption by reducing ENaC surface expression primarily by increasing its proteasomal degradation. Regulates neuronal apoptosis via modulation of LRP8/APOER2 levels and related anti-apoptotic signaling pathways. The sequence is that of Proprotein convertase subtilisin/kexin type 9 (PCSK9) from Pongo pygmaeus (Bornean orangutan).